Reading from the N-terminus, the 179-residue chain is CMT1A duplicated region transcript 4 protein homolog (179 aa).

Low complexity predominate over residues 1–15; the sequence is MISRPESSLSGLESS. Positions 1-20 are disordered; sequence MISRPESSLSGLESSQEVQK.

In Mus musculus (Mouse), this protein is CMT1A duplicated region transcript 4 protein homolog (Cdrt4).